Reading from the N-terminus, the 621-residue chain is MLLLPSAADGRGTAITHALTSASTLCQVEPVGRWFEAFVKRRNRNASASFQELEDKKELSEESEDEELQLEEFPMLKTLDPKDWKNQDHYAVLGLGHVRYKATQRQIKAAHKAMVLKHHPDKRKAAGEPIKEGDNDYFTCITKAYEMLSDPVKRRAFNSVDPTFDNSVPSKSEAKDNFFEVFTPVFERNSRWSNKKNVPKLGDMNSSFEDVDIFYSFWYNFDSWREFSYLDEEEKEKAECRDERRWIEKQNRATRAQRKKEEMNRIRTLVDNAYSCDPRIKKFKEEEKAKKEAEKKAKAEAKRKEQEAKEKQRQAELEAARLAKEKEEEEVRQQALLAKKEKDIQKKAIKKERQKLRNSCKTWNHFSDNEAERVKMMEEVEKLCDRLELASLQCLNETLTSCTKEVGKAALEKQIEEINEQIRKEKEEAEARMRQASKNTEKSTGGGGNGSKNWSEDDLQLLIKAVNLFPAGTNSRWEVIANYMNIHSSSGVKRTAKDVIGKAKSLQKLDPHQKDDINKKAFDKFKKEHGVVPQADNATPSERFEGPYTDFTPWTTEEQKLLEQALKTYPVNTPERWEKIAEAVPGRTKKDCMKRYKELVEMVKAKKAAQEQVLNASRAKK.

An N-acetylmethionine modification is found at M1. Residues 23–31 (STLCQVEPV) form an epitope (recognized by CD8(+) cytotoxic T-lymphocytes) region. S47, S49, S60, and S63 each carry phosphoserine. Residues 88–161 (DHYAVLGLGH…VKRRAFNSVD (74 aa)) form the J domain. Positions 160-250 (VDPTFDNSVP…RDERRWIEKQ (91 aa)) are ZRF1-UBD. Disordered regions lie at residues 294 to 315 (EKKA…QRQA) and 426 to 453 (KEEA…GSKN). SANT domains follow at residues 449-511 (NGSK…KLDP) and 549-604 (TDFT…EMVK).

Component of ribosome-associated complex (RAC), a heterodimer composed of Hsp70/DnaK-type chaperone HSPA14 and Hsp40/DnaJ-type chaperone DNAJC2. Interacts (via ZRF1-UBD region) with ID1. Phosphorylated in M (mitotic) phase. As to expression, widely expressed.

The protein resides in the nucleus. Its subcellular location is the cytoplasm. The protein localises to the cytosol. Functionally, acts both as a chaperone in the cytosol and as a chromatin regulator in the nucleus. When cytosolic, acts as a molecular chaperone: component of the ribosome-associated complex (RAC), a complex involved in folding or maintaining nascent polypeptides in a folding-competent state. In the RAC complex, stimulates the ATPase activity of the ribosome-associated pool of Hsp70-type chaperones HSPA14 that bind to the nascent polypeptide chain. When nuclear, mediates the switching from polycomb-repressed genes to an active state: specifically recruited at histone H2A ubiquitinated at 'Lys-119' (H2AK119ub), and promotes the displacement of the polycomb PRC1 complex from chromatin, thereby facilitating transcription activation. The protein is DnaJ homolog subfamily C member 2 (DNAJC2) of Homo sapiens (Human).